Reading from the N-terminus, the 122-residue chain is Large ribosomal subunit protein uL14 (122 aa).

Belongs to the universal ribosomal protein uL14 family. Part of the 50S ribosomal subunit. Forms a cluster with proteins L3 and L19. In the 70S ribosome, L14 and L19 interact and together make contacts with the 16S rRNA in bridges B5 and B8.

Functionally, binds to 23S rRNA. Forms part of two intersubunit bridges in the 70S ribosome. The polypeptide is Large ribosomal subunit protein uL14 (Pelodictyon phaeoclathratiforme (strain DSM 5477 / BU-1)).